Consider the following 92-residue polypeptide: Small ribosomal subunit protein uS19 (92 aa).

Belongs to the universal ribosomal protein uS19 family.

Protein S19 forms a complex with S13 that binds strongly to the 16S ribosomal RNA. In Rickettsia akari (strain Hartford), this protein is Small ribosomal subunit protein uS19.